Here is a 79-residue protein sequence, read N- to C-terminus: uncharacterized protein (79 aa).

Residues 4-43 (QENEDLRKQLVEASELLKSQAKELKDAHQQQKLALQDFLE) are a coiled coil.

This is an uncharacterized protein from Homo sapiens (Human).